The primary structure comprises 142 residues: Large ribosomal subunit protein uL13 (142 aa).

Belongs to the universal ribosomal protein uL13 family. In terms of assembly, part of the 50S ribosomal subunit.

Functionally, this protein is one of the early assembly proteins of the 50S ribosomal subunit, although it is not seen to bind rRNA by itself. It is important during the early stages of 50S assembly. The sequence is that of Large ribosomal subunit protein uL13 from Akkermansia muciniphila (strain ATCC BAA-835 / DSM 22959 / JCM 33894 / BCRC 81048 / CCUG 64013 / CIP 107961 / Muc).